The primary structure comprises 257 residues: Receptor expression-enhancing protein 4 (257 aa).

The next 2 membrane-spanning stretches (helical) occupy residues 1-21 (MVSWMICRLVVLVFGMLCPAY) and 42-62 (WIVFALFMAAEIITDIFISWF). Phosphoserine is present on residues Ser152 and Ser194. The segment at 178–257 (PHQRPPIGYR…KKTVPSDMDS (80 aa)) is disordered. Thr196 is modified (phosphothreonine). The residue at position 202 (Ser202) is a Phosphoserine. Residue Thr250 is modified to Phosphothreonine. Ser253 carries the phosphoserine modification.

Belongs to the DP1 family.

The protein resides in the endoplasmic reticulum membrane. Its function is as follows. Microtubule-binding protein required to ensure proper cell division and nuclear envelope reassembly by sequestering the endoplasmic reticulum away from chromosomes during mitosis. Probably acts by clearing the endoplasmic reticulum membrane from metaphase chromosomes. The protein is Receptor expression-enhancing protein 4 (REEP4) of Pongo abelii (Sumatran orangutan).